The sequence spans 393 residues: NAD(P)H-quinone oxidoreductase subunit H, chloroplastic (393 aa).

This sequence belongs to the complex I 49 kDa subunit family. NDH is composed of at least 16 different subunits, 5 of which are encoded in the nucleus.

The protein localises to the plastid. Its subcellular location is the chloroplast thylakoid membrane. The catalysed reaction is a plastoquinone + NADH + (n+1) H(+)(in) = a plastoquinol + NAD(+) + n H(+)(out). It catalyses the reaction a plastoquinone + NADPH + (n+1) H(+)(in) = a plastoquinol + NADP(+) + n H(+)(out). NDH shuttles electrons from NAD(P)H:plastoquinone, via FMN and iron-sulfur (Fe-S) centers, to quinones in the photosynthetic chain and possibly in a chloroplast respiratory chain. The immediate electron acceptor for the enzyme in this species is believed to be plastoquinone. Couples the redox reaction to proton translocation, and thus conserves the redox energy in a proton gradient. In Gossypium hirsutum (Upland cotton), this protein is NAD(P)H-quinone oxidoreductase subunit H, chloroplastic.